The following is a 227-amino-acid chain: Ribose-5-phosphate isomerase A (227 aa).

Residues 28–31 (TGST), 84–87 (DGAD), and 97–100 (KGGG) contribute to the substrate site. Residue Glu-106 is the Proton acceptor of the active site. Lys-124 contributes to the substrate binding site.

Belongs to the ribose 5-phosphate isomerase family. In terms of assembly, homodimer.

The catalysed reaction is aldehydo-D-ribose 5-phosphate = D-ribulose 5-phosphate. Its pathway is carbohydrate degradation; pentose phosphate pathway; D-ribose 5-phosphate from D-ribulose 5-phosphate (non-oxidative stage): step 1/1. Its function is as follows. Catalyzes the reversible conversion of ribose-5-phosphate to ribulose 5-phosphate. The polypeptide is Ribose-5-phosphate isomerase A (Lactiplantibacillus plantarum (strain ATCC BAA-793 / NCIMB 8826 / WCFS1) (Lactobacillus plantarum)).